Consider the following 341-residue polypeptide: Ketol-acid reductoisomerase (NADP(+)) (341 aa).

In terms of domain architecture, KARI N-terminal Rossmann spans A2–T181. NADP(+) contacts are provided by residues Y25–Q28, R48, S52, and D82–Q85. H107 is a catalytic residue. An NADP(+)-binding site is contributed by G133. Residues T182 to V327 form the KARI C-terminal knotted domain. D190, E194, E226, and E230 together coordinate Mg(2+). Substrate is bound at residue S251.

This sequence belongs to the ketol-acid reductoisomerase family. Mg(2+) is required as a cofactor.

The enzyme catalyses (2R)-2,3-dihydroxy-3-methylbutanoate + NADP(+) = (2S)-2-acetolactate + NADPH + H(+). It carries out the reaction (2R,3R)-2,3-dihydroxy-3-methylpentanoate + NADP(+) = (S)-2-ethyl-2-hydroxy-3-oxobutanoate + NADPH + H(+). Its pathway is amino-acid biosynthesis; L-isoleucine biosynthesis; L-isoleucine from 2-oxobutanoate: step 2/4. It functions in the pathway amino-acid biosynthesis; L-valine biosynthesis; L-valine from pyruvate: step 2/4. In terms of biological role, involved in the biosynthesis of branched-chain amino acids (BCAA). Catalyzes an alkyl-migration followed by a ketol-acid reduction of (S)-2-acetolactate (S2AL) to yield (R)-2,3-dihydroxy-isovalerate. In the isomerase reaction, S2AL is rearranged via a Mg-dependent methyl migration to produce 3-hydroxy-3-methyl-2-ketobutyrate (HMKB). In the reductase reaction, this 2-ketoacid undergoes a metal-dependent reduction by NADPH to yield (R)-2,3-dihydroxy-isovalerate. The chain is Ketol-acid reductoisomerase (NADP(+)) from Shouchella clausii (strain KSM-K16) (Alkalihalobacillus clausii).